The following is a 269-amino-acid chain: Sushi domain-containing protein 3 (269 aa).

The tract at residues 1 to 23 (MRRTSATLRGRARPRWRAGNTTP) is disordered. Residues 1 to 103 (MRRTSATLRG…VPPHETFGFK (103 aa)) lie on the Extracellular side of the membrane. Residues 30–93 (GTCAQLHPPP…WSSGSPVCKA (64 aa)) enclose the Sushi domain. Cystine bridges form between Cys-32–Cys-75 and Cys-61–Cys-91. Residues 104–124 (VAVIASIVSCAIILLMSMAFL) traverse the membrane as a helical segment. At 125-269 (TCCLLKCVQK…PGRPKVYLPG (145 aa)) the chain is on the cytoplasmic side. The tract at residues 171–237 (NNSSSVGGGN…RMGTPGPGGC (67 aa)) is disordered. Positions 176-190 (VGGGNGGPSGGGGKP) are enriched in gly residues.

It is found in the cell membrane. This is Sushi domain-containing protein 3 (Susd3) from Mus musculus (Mouse).